A 273-amino-acid polypeptide reads, in one-letter code: Ribosomal protein L11 methyltransferase (273 aa).

Residues T112, G133, D155, and N203 each coordinate S-adenosyl-L-methionine.

This sequence belongs to the methyltransferase superfamily. PrmA family.

It is found in the cytoplasm. The catalysed reaction is L-lysyl-[protein] + 3 S-adenosyl-L-methionine = N(6),N(6),N(6)-trimethyl-L-lysyl-[protein] + 3 S-adenosyl-L-homocysteine + 3 H(+). In terms of biological role, methylates ribosomal protein L11. The protein is Ribosomal protein L11 methyltransferase of Deinococcus radiodurans (strain ATCC 13939 / DSM 20539 / JCM 16871 / CCUG 27074 / LMG 4051 / NBRC 15346 / NCIMB 9279 / VKM B-1422 / R1).